The sequence spans 294 residues: Protein CHLOROPLAST J-LIKE DOMAIN 1, chloroplastic (294 aa).

The transit peptide at 1 to 58 directs the protein to the chloroplast; the sequence is MAPALSTSCSSVMAFSTSNALRYHHPQISLRNSLRAPKSPSFVRLPLGKVLQSRIVIR. The Stromal segment spans residues 59–164; it reads AASSAAGNPQ…GPRFSRSSKN (106 aa). The tract at residues 74 to 152 is J-like domain; sequence NPYEVLGVNP…IKYADKQPII (79 aa). A helical membrane pass occupies residues 165–182; that stretch reads DMLINLAISVVFSAWIAI. The Chloroplast intermembrane segment spans residues 183-233; sequence KRNVEYKPLQFMSFVFVYRIFEKLKSFEAPSSPIYNEEGEESGRGLRMGKR. A helical membrane pass occupies residues 234–256; that stretch reads LLRSLSLVFGSILLASLAYTGFL. Topologically, residues 257–275 are stromal; the sequence is NGIEYMGYSIPMVLYNNQE. Residues 276–293 form a helical membrane-spanning segment; it reads LIVTASSAFMLYVIASFY. Position 294 (R294) is a topological domain, chloroplast intermembrane.

As to quaternary structure, interacts (via J-like domain) with ARC6 (via J domain).

It localises to the plastid. It is found in the chloroplast inner membrane. In terms of biological role, probably involved in the regulation of the fatty acid metabolic process in chloroplasts, especially chloroplastic galactolipids monogalactosyldiacylglycerol (MGDG) and digalactosyldiacylglycerol (DGDG). The protein is Protein CHLOROPLAST J-LIKE DOMAIN 1, chloroplastic of Arabidopsis thaliana (Mouse-ear cress).